The sequence spans 282 residues: 2-dehydro-3-deoxyphosphooctonate aldolase (282 aa).

It belongs to the KdsA family.

The protein localises to the cytoplasm. The enzyme catalyses D-arabinose 5-phosphate + phosphoenolpyruvate + H2O = 3-deoxy-alpha-D-manno-2-octulosonate-8-phosphate + phosphate. Its pathway is carbohydrate biosynthesis; 3-deoxy-D-manno-octulosonate biosynthesis; 3-deoxy-D-manno-octulosonate from D-ribulose 5-phosphate: step 2/3. It participates in bacterial outer membrane biogenesis; lipopolysaccharide biosynthesis. The chain is 2-dehydro-3-deoxyphosphooctonate aldolase from Shewanella baltica (strain OS223).